The following is a 506-amino-acid chain: Ribose import ATP-binding protein RbsA 1 (506 aa).

2 consecutive ABC transporter domains span residues 5–241 (LALT…VGRR) and 254–498 (RDAA…TSDA). Residue 37–44 (GENGAGKS) participates in ATP binding.

The protein belongs to the ABC transporter superfamily. Ribose importer (TC 3.A.1.2.1) family. As to quaternary structure, the complex is composed of an ATP-binding protein (RbsA), two transmembrane proteins (RbsC) and a solute-binding protein (RbsB).

Its subcellular location is the cell inner membrane. The enzyme catalyses D-ribose(out) + ATP + H2O = D-ribose(in) + ADP + phosphate + H(+). In terms of biological role, part of the ABC transporter complex RbsABC involved in ribose import. Responsible for energy coupling to the transport system. The protein is Ribose import ATP-binding protein RbsA 1 of Burkholderia thailandensis (strain ATCC 700388 / DSM 13276 / CCUG 48851 / CIP 106301 / E264).